Here is a 168-residue protein sequence, read N- to C-terminus: Gamma-glutamylaminecyclotransferase (168 aa).

The interval 1–20 (MPGPECKWSTTETGAPCGTD) is disordered. 32–35 (YGTL) lines the substrate pocket. The active-site Proton acceptor is the Glu-107.

The protein belongs to the gamma-glutamylcyclotransferase family. In terms of assembly, monomer.

It catalyses the reaction epsilon-(gamma-L-glutamyl)-L-lysine = 5-oxo-L-proline + L-lysine. In terms of biological role, contributes to degradation of proteins cross-linked by transglutaminases by degrading the cross-link between a lysine and a glutamic acid residue. Catalyzes the formation of 5-oxo-L-proline from L-gamma-glutamyl-L-epsilon-lysine. Inactive with L-gamma-glutamyl-alpha-amino acid substrates such as L-gamma-glutamyl-L-alpha-cysteine and L-gamma-glutamyl-L-alpha-alanine. This is Gamma-glutamylaminecyclotransferase (GGACT) from Bos taurus (Bovine).